A 521-amino-acid chain; its full sequence is MSELAAVLTRSMQASAGDLMVLDRETSLWCRHPWPEVHGLAESVAAWLLDHDRPAAVGLVGEPTVELVAAIQGAWLAGAAVSILPGPVRGANDQRWADATLTRFLGIGVRTVLSQGSYLARLRSVDTAGVTIGDLSTAAHTNRSATPVASEGPAVLQGTAGSTGAPRTAILSPGAVLSNLRGLNQRVGTDAATDVGCSWLPLYHDMGLAFVLSAALAGAPLWLAPTTAFTASPFRWLSWLSDSGATMTAAPNFAYNLIGKYARRVSEVDLGALRVTLNGGEPVDCDGLTRFAEAMAPFGFDAGAVLPSYGLAESTCAVTVPVPGIGLLADRVIDGSGAHKHAVLGNPIPGMEVRISCGDQAAGNASREIGEIEIRGASMMAGYLGQQPIDPDDWFATGDLGYLGAGGLVVCGRAKEVISIAGRNIFPTEVELVAAQVRGVREGAVVALGTGDRSTRPGLVVAAEFRGPDEANARAELIQRVASECGIVPSDVVFVSPGSLPRTSSGKLRRLAVRRSLEMAD.

The protein belongs to the ATP-dependent AMP-binding enzyme family.

It carries out the reaction a long-chain fatty acid + holo-[ACP] + ATP = a long-chain fatty acyl-[ACP] + AMP + diphosphate. The catalysed reaction is a medium-chain fatty acid + holo-[ACP] + ATP = a medium-chain fatty acyl-[ACP] + AMP + diphosphate. The protein operates within siderophore biosynthesis; mycobactin biosynthesis. Its function is as follows. Activates lipidic moieties required for mycobactin biosynthesis. Converts medium- to long-chain aliphatic fatty acids into acyl adenylate, which is further transferred on to the phosphopantetheine arm of the carrier protein MbtL. This Mycobacterium bovis (strain ATCC BAA-935 / AF2122/97) protein is Medium/long-chain-fatty-acid--[acyl-carrier-protein] ligase MbtM (mbtM).